Reading from the N-terminus, the 410-residue chain is Peptidase T (410 aa).

His-79 is a Zn(2+) binding site. Asp-81 is a catalytic residue. Asp-142 is a Zn(2+) binding site. Catalysis depends on Glu-176, which acts as the Proton acceptor. Positions 177, 199, and 381 each coordinate Zn(2+).

It belongs to the peptidase M20B family. Zn(2+) is required as a cofactor.

It localises to the cytoplasm. It carries out the reaction Release of the N-terminal residue from a tripeptide.. In terms of biological role, cleaves the N-terminal amino acid of tripeptides. The chain is Peptidase T from Listeria innocua serovar 6a (strain ATCC BAA-680 / CLIP 11262).